The sequence spans 409 residues: Cobalt-precorrin-5B C(1)-methyltransferase (409 aa).

It belongs to the CbiD family.

It catalyses the reaction Co-precorrin-5B + S-adenosyl-L-methionine = Co-precorrin-6A + S-adenosyl-L-homocysteine. The protein operates within cofactor biosynthesis; adenosylcobalamin biosynthesis; cob(II)yrinate a,c-diamide from sirohydrochlorin (anaerobic route): step 6/10. Functionally, catalyzes the methylation of C-1 in cobalt-precorrin-5B to form cobalt-precorrin-6A. The chain is Cobalt-precorrin-5B C(1)-methyltransferase from Methanopyrus kandleri (strain AV19 / DSM 6324 / JCM 9639 / NBRC 100938).